We begin with the raw amino-acid sequence, 269 residues long: 3-methyl-2-oxobutanoate hydroxymethyltransferase (269 aa).

Mg(2+) contacts are provided by aspartate 43 and aspartate 82. 3-methyl-2-oxobutanoate contacts are provided by residues 43–44, aspartate 82, and lysine 110; that span reads DS. A Mg(2+)-binding site is contributed by glutamate 112. The Proton acceptor role is filled by glutamate 179.

The protein belongs to the PanB family. Homodecamer; pentamer of dimers. It depends on Mg(2+) as a cofactor.

It is found in the cytoplasm. It catalyses the reaction 3-methyl-2-oxobutanoate + (6R)-5,10-methylene-5,6,7,8-tetrahydrofolate + H2O = 2-dehydropantoate + (6S)-5,6,7,8-tetrahydrofolate. It functions in the pathway cofactor biosynthesis; (R)-pantothenate biosynthesis; (R)-pantoate from 3-methyl-2-oxobutanoate: step 1/2. Catalyzes the reversible reaction in which hydroxymethyl group from 5,10-methylenetetrahydrofolate is transferred onto alpha-ketoisovalerate to form ketopantoate. The polypeptide is 3-methyl-2-oxobutanoate hydroxymethyltransferase (Acinetobacter baumannii (strain SDF)).